Consider the following 133-residue polypeptide: Small ribosomal subunit protein uS8 (133 aa).

It belongs to the universal ribosomal protein uS8 family. In terms of assembly, part of the 30S ribosomal subunit. Contacts proteins S5 and S12.

One of the primary rRNA binding proteins, it binds directly to 16S rRNA central domain where it helps coordinate assembly of the platform of the 30S subunit. The polypeptide is Small ribosomal subunit protein uS8 (Prochlorococcus marinus (strain MIT 9301)).